The primary structure comprises 140 residues: Probable glycine cleavage system H protein 3 (140 aa).

Residues 29–110 (VVSIGVTDLG…PYDSWIVKIR (82 aa)) form the Lipoyl-binding domain. Lys-70 is modified (N6-lipoyllysine).

It belongs to the GcvH family. In terms of assembly, the glycine cleavage system is composed of four proteins: P, T, L and H. (R)-lipoate is required as a cofactor.

The glycine cleavage system catalyzes the degradation of glycine. The H protein shuttles the methylamine group of glycine from the P protein to the T protein. This is Probable glycine cleavage system H protein 3 from Saccharolobus solfataricus (strain ATCC 35092 / DSM 1617 / JCM 11322 / P2) (Sulfolobus solfataricus).